Here is a 273-residue protein sequence, read N- to C-terminus: Undecaprenyl-diphosphatase (273 aa).

7 helical membrane-spanning segments follow: residues 45–65 (AKTF…VMFW), 90–110 (LTLI…LIFH), 116–136 (LFNP…LIAA), 154–173 (YRQA…PGFS), 190–210 (YAAS…ATAL), 222–242 (ADFP…LVAI), and 252–272 (ISFI…YVVF).

This sequence belongs to the UppP family.

It is found in the cell inner membrane. The catalysed reaction is di-trans,octa-cis-undecaprenyl diphosphate + H2O = di-trans,octa-cis-undecaprenyl phosphate + phosphate + H(+). In terms of biological role, catalyzes the dephosphorylation of undecaprenyl diphosphate (UPP). Confers resistance to bacitracin. The polypeptide is Undecaprenyl-diphosphatase (Enterobacter sp. (strain 638)).